A 144-amino-acid polypeptide reads, in one-letter code: Flagellar assembly factor FliW (144 aa).

It belongs to the FliW family. Interacts with translational regulator CsrA and flagellin(s).

The protein resides in the cytoplasm. Its function is as follows. Acts as an anti-CsrA protein, binds CsrA and prevents it from repressing translation of its target genes, one of which is flagellin. Binds to flagellin and participates in the assembly of the flagellum. The protein is Flagellar assembly factor FliW of Bacillus pumilus (strain SAFR-032).